We begin with the raw amino-acid sequence, 587 residues long: Zinc finger protein 496 (587 aa).

Positions 1 to 40 (MPTALCPRVLAPKESEEPRKMRSPPGENPSPQGELPSPES) are disordered. Over residues 11–20 (APKESEEPRK) the composition is skewed to basic and acidic residues. A Glycyl lysine isopeptide (Lys-Gly) (interchain with G-Cter in SUMO2) cross-link involves residue Lys-13. Positions 42-124 (RRLFRRFRYQ…AAVEALEREP (83 aa)) constitute an SCAN box domain. At Ser-185 the chain carries Phosphoserine. The KRAB domain maps to 221 to 291 (SPFKDMILCF…ELQDLQGKEV (71 aa)). The interval 260-282 (PPNDLAAQPDLSQGEENEPRVPE) is disordered. Ser-299 is subject to Phosphoserine. Residues 358–399 (SSSGDEDSQHGPYCTEELGSPTEKQRSLPASHRSSTEAGGEV) form a disordered region. Over residues 389–399 (HRSSTEAGGEV) the composition is skewed to polar residues. Lys-403 participates in a covalent cross-link: Glycyl lysine isopeptide (Lys-Gly) (interchain with G-Cter in SUMO2). The C2H2-type 1; degenerate zinc finger occupies 406 to 428 (YVCPNCGKIFRWRVNFIRHLRSR). C2H2-type zinc fingers lie at residues 435 to 457 (HECSVCGELFSDSEDLDGHLESH) and 463 to 485 (YRCGACGKSFRLNSHLLSHRRIH). Residues 488-513 (PDRLQPVEKREQAASEDADKGPKEPL) are disordered. Lys-496 is covalently cross-linked (Glycyl lysine isopeptide (Lys-Gly) (interchain with G-Cter in SUMO2)). 2 C2H2-type zinc fingers span residues 522–545 (FQCCECGKAFQRHDHLARHRSHFH) and 553–575 (FQCRYCVKSFTQNYDLLRHERLH).

It belongs to the krueppel C2H2-type zinc-finger protein family. As to quaternary structure, interacts (via zinc-fingers) with JARID2. Interacts with NSD1.

Its subcellular location is the nucleus. Functionally, DNA-binding transcription factor that can both act as an activator and a repressor. The sequence is that of Zinc finger protein 496 (ZNF496) from Homo sapiens (Human).